We begin with the raw amino-acid sequence, 202 residues long: FMN-dependent NADH:quinone oxidoreductase (202 aa).

Residues Ser-10 and 95-98 contribute to the FMN site; that span reads MYNF.

Belongs to the azoreductase type 1 family. As to quaternary structure, homodimer. Requires FMN as cofactor.

It catalyses the reaction 2 a quinone + NADH + H(+) = 2 a 1,4-benzosemiquinone + NAD(+). The catalysed reaction is N,N-dimethyl-1,4-phenylenediamine + anthranilate + 2 NAD(+) = 2-(4-dimethylaminophenyl)diazenylbenzoate + 2 NADH + 2 H(+). In terms of biological role, quinone reductase that provides resistance to thiol-specific stress caused by electrophilic quinones. Its function is as follows. Also exhibits azoreductase activity. Catalyzes the reductive cleavage of the azo bond in aromatic azo compounds to the corresponding amines. In Pseudoalteromonas atlantica (strain T6c / ATCC BAA-1087), this protein is FMN-dependent NADH:quinone oxidoreductase.